Here is a 262-residue protein sequence, read N- to C-terminus: Type III pantothenate kinase (262 aa).

Residue 9–16 (DAGNSRIK) coordinates ATP. Substrate is bound by residues Tyr-96 and 103–106 (GSDR). Residue Asp-105 is the Proton acceptor of the active site. Residue Thr-129 participates in ATP binding. Thr-189 lines the substrate pocket.

The protein belongs to the type III pantothenate kinase family. Homodimer. NH4(+) is required as a cofactor. It depends on K(+) as a cofactor.

It is found in the cytoplasm. The catalysed reaction is (R)-pantothenate + ATP = (R)-4'-phosphopantothenate + ADP + H(+). It functions in the pathway cofactor biosynthesis; coenzyme A biosynthesis; CoA from (R)-pantothenate: step 1/5. In terms of biological role, catalyzes the phosphorylation of pantothenate (Pan), the first step in CoA biosynthesis. The sequence is that of Type III pantothenate kinase from Burkholderia ambifaria (strain MC40-6).